The sequence spans 427 residues: Serine--tRNA ligase (427 aa).

229–231 (TAE) is an L-serine binding site. 260-262 (RSE) contributes to the ATP binding site. Glutamate 283 provides a ligand contact to L-serine. Position 347-350 (347-350 (EISS)) interacts with ATP. Residue serine 383 participates in L-serine binding.

It belongs to the class-II aminoacyl-tRNA synthetase family. Type-1 seryl-tRNA synthetase subfamily. As to quaternary structure, homodimer. The tRNA molecule binds across the dimer.

The protein resides in the cytoplasm. It carries out the reaction tRNA(Ser) + L-serine + ATP = L-seryl-tRNA(Ser) + AMP + diphosphate + H(+). The catalysed reaction is tRNA(Sec) + L-serine + ATP = L-seryl-tRNA(Sec) + AMP + diphosphate + H(+). Its pathway is aminoacyl-tRNA biosynthesis; selenocysteinyl-tRNA(Sec) biosynthesis; L-seryl-tRNA(Sec) from L-serine and tRNA(Sec): step 1/1. In terms of biological role, catalyzes the attachment of serine to tRNA(Ser). Is also able to aminoacylate tRNA(Sec) with serine, to form the misacylated tRNA L-seryl-tRNA(Sec), which will be further converted into selenocysteinyl-tRNA(Sec). The polypeptide is Serine--tRNA ligase (Nitrosococcus oceani (strain ATCC 19707 / BCRC 17464 / JCM 30415 / NCIMB 11848 / C-107)).